The chain runs to 601 residues: Somatic embryogenesis receptor kinase 5 (601 aa).

A signal peptide spans 1 to 24 (MEHGSSRGFIWLILFLDFVSRVTG). Over 25–215 (KTQVDALIAL…SPSPSPSGTS (191 aa)) the chain is Extracellular. N-linked (GlcNAc...) asparagine glycans are attached at residues asparagine 52, asparagine 81, asparagine 105, asparagine 129, asparagine 151, and asparagine 184. 5 LRR repeats span residues 71–94 (SVTR…AQLP), 95–118 (NLQY…GDLM), 119–141 (ELVS…LGKL), 143–165 (KLRF…LTAL), and 166–188 (PLDV…GSFS). A helical membrane pass occupies residues 216–236 (AAIVVGVAAGAALLFALAWWL). Over 237–601 (RRKLQGHFLD…IENDYPSGPR (365 aa)) the chain is Cytoplasmic. Threonine 272 bears the Phosphothreonine mark. The Protein kinase domain occupies 275–572 (FSKRNVLGKG…KEEMPIHDFN (298 aa)). 281–289 (LGKGRFGIL) contributes to the ATP binding site. Position 298 is a phosphothreonine (threonine 298). Lysine 303 contacts ATP. Residues serine 356 and serine 359 each carry the phosphoserine modification. The Proton acceptor role is filled by aspartate 402. 3 positions are modified to phosphothreonine: threonine 435, threonine 436, and threonine 441. Residue tyrosine 449 is modified to Phosphotyrosine. A Phosphoserine modification is found at serine 451. Threonine 452 is modified (phosphothreonine). Phosphoserine occurs at positions 456 and 506. Threonine 532 carries the post-translational modification Phosphothreonine.

It belongs to the protein kinase superfamily. Ser/Thr protein kinase family. In terms of assembly, interacts with TMK4/BARK1. Autophosphorylated.

It localises to the cell membrane. It catalyses the reaction L-seryl-[protein] + ATP = O-phospho-L-seryl-[protein] + ADP + H(+). The enzyme catalyses L-threonyl-[protein] + ATP = O-phospho-L-threonyl-[protein] + ADP + H(+). Functionally, serine/threonine-kinase of unknown function. This Arabidopsis thaliana (Mouse-ear cress) protein is Somatic embryogenesis receptor kinase 5 (SERK5).